The primary structure comprises 303 residues: Dihydroorotate dehydrogenase B (NAD(+)), catalytic subunit (303 aa).

FMN-binding positions include Ser21 and Lys45–Gly46. Residues Lys45 and Asn69–Leu73 each bind substrate. 2 residues coordinate FMN: Asn99 and Asn127. Residue Asn127 coordinates substrate. Cys130 (nucleophile) is an active-site residue. Residues Lys165 and Ile191 each coordinate FMN. A substrate-binding site is contributed by Asn192–Thr193. Residues Gly217, Gly243–Gly244, and Gly265–Thr266 each bind FMN.

It belongs to the dihydroorotate dehydrogenase family. Type 1 subfamily. As to quaternary structure, heterotetramer of 2 PyrK and 2 PyrD type B subunits. FMN is required as a cofactor.

Its subcellular location is the cytoplasm. It catalyses the reaction (S)-dihydroorotate + NAD(+) = orotate + NADH + H(+). It functions in the pathway pyrimidine metabolism; UMP biosynthesis via de novo pathway; orotate from (S)-dihydroorotate (NAD(+) route): step 1/1. In terms of biological role, catalyzes the conversion of dihydroorotate to orotate with NAD(+) as electron acceptor. This chain is Dihydroorotate dehydrogenase B (NAD(+)), catalytic subunit (pyrD), found in Phocaeicola vulgatus (strain ATCC 8482 / DSM 1447 / JCM 5826 / CCUG 4940 / NBRC 14291 / NCTC 11154) (Bacteroides vulgatus).